Here is a 247-residue protein sequence, read N- to C-terminus: tRNA uridine(34) hydroxylase (247 aa).

The region spanning 124 to 218 is the Rhodanese domain; that stretch reads TKQDVIVIDT…YLEDTQNKNN (95 aa). Residue Cys-178 is the Cysteine persulfide intermediate of the active site.

It belongs to the TrhO family.

It catalyses the reaction uridine(34) in tRNA + AH2 + O2 = 5-hydroxyuridine(34) in tRNA + A + H2O. Its function is as follows. Catalyzes oxygen-dependent 5-hydroxyuridine (ho5U) modification at position 34 in tRNAs. The chain is tRNA uridine(34) hydroxylase from Rickettsia rickettsii (strain Iowa).